The sequence spans 128 residues: Large ribosomal subunit protein eL8 (128 aa).

The protein belongs to the eukaryotic ribosomal protein eL8 family. In terms of assembly, part of the 50S ribosomal subunit. Probably part of the RNase P complex.

Its subcellular location is the cytoplasm. Functionally, multifunctional RNA-binding protein that recognizes the K-turn motif in ribosomal RNA, the RNA component of RNase P, box H/ACA, box C/D and box C'/D' sRNAs. In Nitrosopumilus maritimus (strain SCM1), this protein is Large ribosomal subunit protein eL8.